Reading from the N-terminus, the 260-residue chain is uncharacterized protein (260 aa).

In terms of domain architecture, PNPLA spans 8-166 (LALGSGGARG…VDRIPVSVVK (159 aa)). Residues 39–43 (GSSMG) carry the GXSXG motif. Ser-41 functions as the Nucleophile in the catalytic mechanism. The active-site Proton acceptor is the Asp-153. Positions 153–155 (DGA) match the DGA/G motif.

The protein belongs to the NTE family.

This is an uncharacterized protein from Bacillus subtilis (strain 168).